The primary structure comprises 262 residues: Eukaryotic translation initiation factor 3 subunit G (262 aa).

The region spanning 182–260 (NTCRVTNLPQ…MVLKVEWTRP (79 aa)) is the RRM domain.

The protein belongs to the eIF-3 subunit G family. As to quaternary structure, component of the eukaryotic translation initiation factor 3 (eIF-3) complex.

It is found in the cytoplasm. RNA-binding component of the eukaryotic translation initiation factor 3 (eIF-3) complex, which is involved in protein synthesis of a specialized repertoire of mRNAs and, together with other initiation factors, stimulates binding of mRNA and methionyl-tRNAi to the 40S ribosome. The eIF-3 complex specifically targets and initiates translation of a subset of mRNAs involved in cell proliferation. This subunit can bind 18S rRNA. Binds to GC-rich 5'UTRs in cholinergic motor neurons, thereby may play a role in translational regulation of mRNAs involved in neuropeptide signaling and stress response, including hlh-30 isoform d and ncs-2. This is Eukaryotic translation initiation factor 3 subunit G from Caenorhabditis elegans.